A 444-amino-acid polypeptide reads, in one-letter code: Deoxyguanosinetriphosphate triphosphohydrolase-like protein (444 aa).

Residues 66 to 259 (RLTHSLEAAQ…MELADDIAYG (194 aa)) enclose the HD domain.

Belongs to the dGTPase family. Type 2 subfamily.

In Vibrio campbellii (strain ATCC BAA-1116), this protein is Deoxyguanosinetriphosphate triphosphohydrolase-like protein.